The following is a 521-amino-acid chain: Aspartic proteinase yapsin-1 (521 aa).

Residues 1-17 (MRIWILIFFSFIKLVSS) form the signal peptide. Residues 18–500 (LQYTGNGVLA…NAVANAGNSF (483 aa)) lie on the Extracellular side of the membrane. One can recognise a Peptidase A1 domain in the interval 67–409 (YTTTLSIGRP…HQSQKMIAIG (343 aa)). D85 is an active-site residue. N136, N157, N250, N289, N295, N354, N414, N418, N460, and N484 each carry an N-linked (GlcNAc...) asparagine glycan. The helical transmembrane segment at 501–521 (SPLSAMVIMMMSAVFLGLGII) threads the bilayer.

Belongs to the peptidase A1 family.

Its subcellular location is the endoplasmic reticulum membrane. The protein resides in the secreted. The protein localises to the cell wall. Functionally, cleaves at paired basic residues. The chain is Aspartic proteinase yapsin-1 (yps1) from Schizosaccharomyces pombe (strain 972 / ATCC 24843) (Fission yeast).